Reading from the N-terminus, the 145-residue chain is Phospholipase A2 (145 aa).

An N-terminal signal peptide occupies residues 1–15 (MRLLVLAALLTVGAG). Residue Q16 is modified to Pyrrolidone carboxylic acid. Residues 16-22 (QAGLNSR) constitute a propeptide, removed by trypsin. 7 cysteine pairs are disulfide-bonded: C33-C99, C49-C145, C51-C67, C66-C127, C73-C120, C83-C113, and C106-C118. Positions 50, 52, and 54 each coordinate Ca(2+). Residue H70 is part of the active site. D71 is a Ca(2+) binding site. D121 is a catalytic residue.

Belongs to the phospholipase A2 family. Monomer or homodimer. The cofactor is Ca(2+). In terms of processing, activated by trypsin cleavage in the duodenum. Can also be activated by thrombin or autocatalytically.

It is found in the secreted. The catalysed reaction is a 1,2-diacyl-sn-glycero-3-phosphocholine + H2O = a 1-acyl-sn-glycero-3-phosphocholine + a fatty acid + H(+). It catalyses the reaction 1,2-ditetradecanoyl-sn-glycero-3-phosphocholine + H2O = 1-tetradecanoyl-sn-glycero-3-phosphocholine + tetradecanoate + H(+). It carries out the reaction 1,2-dihexadecanoyl-sn-glycero-3-phosphocholine + H2O = 1-hexadecanoyl-sn-glycero-3-phosphocholine + hexadecanoate + H(+). The enzyme catalyses 1-hexadecanoyl-2-(9Z-octadecenoyl)-sn-glycero-3-phosphocholine + H2O = 1-hexadecanoyl-sn-glycero-3-phosphocholine + (9Z)-octadecenoate + H(+). The catalysed reaction is 1-hexadecanoyl-2-(5Z,8Z,11Z,14Z-eicosatetraenoyl)-sn-glycero-3-phosphocholine + H2O = 1-hexadecanoyl-sn-glycero-3-phosphocholine + (5Z,8Z,11Z,14Z)-eicosatetraenoate + H(+). It catalyses the reaction 1-hexadecanoyl-2-(9Z-octadecenoyl)-sn-glycero-3-phospho-(1'-sn-glycerol) + H2O = 1-hexadecanoyl-sn-glycero-3-phospho-(1'-sn-glycerol) + (9Z)-octadecenoate + H(+). It carries out the reaction N-hexadecanoyl-1,2-di-(9Z-octadecenoyl)-sn-glycero-3-phosphoethanolamine + H2O = N-hexadecanoyl-1-(9Z-octadecenoyl)-sn-glycero-3-phosphoethanolamine + (9Z)-octadecenoate + H(+). The enzyme catalyses 1-hexadecanoyl-2-(9Z,12Z-octadecadienoyl)-sn-glycero-3-phosphoethanolamine + H2O = 1-hexadecanoyl-sn-glycero-3-phosphoethanolamine + (9Z,12Z)-octadecadienoate + H(+). The catalysed reaction is N,1-dihexadecanoyl-2-(9Z,12Z-octadecadienoyl)-sn-glycero-3-phosphoethanolamine + H2O = N,1-dihexadecanoyl-sn-glycero-3-phosphoethanolamine + (9Z,12Z)-octadecadienoate + H(+). Secretory calcium-dependent phospholipase A2 that primarily targets dietary phospholipids in the intestinal tract. Hydrolyzes the ester bond of the fatty acyl group attached at sn-2 position of phospholipids (phospholipase A2 activity) with preference for phosphatidylethanolamines and phosphatidylglycerols over phosphatidylcholines. May play a role in the biosynthesis of N-acyl ethanolamines that regulate energy metabolism and inflammation in the intestinal tract. Hydrolyzes N-acyl phosphatidylethanolamines to N-acyl lysophosphatidylethanolamines, which are further cleaved by a lysophospholipase D to release N-acyl ethanolamines. May act in an autocrine and paracrine manner. Has anti-helminth activity in a process regulated by gut microbiota. Upon helminth infection of intestinal epithelia, directly affects phosphatidylethanolamine contents in the membrane of helminth larvae, likely controlling an array of phospholipid-mediated cellular processes such as membrane fusion and cell division while providing for better immune recognition, ultimately reducing larvae integrity and infectivity. The chain is Phospholipase A2 (PLA2G1B) from Bos taurus (Bovine).